The primary structure comprises 359 residues: Ferredoxin--NADP reductase (359 aa).

Residues Asp-48, Gln-56, Tyr-61, Ala-101, Phe-139, Asp-304, and Ser-345 each contribute to the FAD site.

Belongs to the ferredoxin--NADP reductase type 2 family. Homodimer. The cofactor is FAD.

The enzyme catalyses 2 reduced [2Fe-2S]-[ferredoxin] + NADP(+) + H(+) = 2 oxidized [2Fe-2S]-[ferredoxin] + NADPH. This chain is Ferredoxin--NADP reductase, found in Ralstonia pickettii (strain 12J).